Consider the following 271-residue polypeptide: p-hydroxybenzoate hydroxylase transcriptional activator (271 aa).

The HTH iclR-type domain occupies 23 to 83 (IAGLAKGLAL…TDEHYFWLTH (61 aa)). The H-T-H motif DNA-binding region spans 45–64 (VTQVAERTGISRTAARRYLK). The 174-residue stretch at 98–271 (LPKVAQSFLN…NTANELRNLV (174 aa)) folds into the IclR-ED domain.

Positive regulator of the pobA gene for p-hydroxybenzoate hydroxylase. The sequence is that of p-hydroxybenzoate hydroxylase transcriptional activator (pobR) from Acinetobacter baylyi (strain ATCC 33305 / BD413 / ADP1).